Here is a 388-residue protein sequence, read N- to C-terminus: Zinc finger protein 1 (388 aa).

Residues Met-1–Thr-19 show a composition bias toward polar residues. Disordered stretches follow at residues Met-1 to Leu-120, Leu-157 to Asp-219, and Ser-236 to Thr-311. Positions Ser-20–Ser-38 are enriched in low complexity. 2 stretches are compositionally biased toward polar residues: residues Tyr-52–Thr-67 and Tyr-88–Arg-97. 2 stretches are compositionally biased toward low complexity: residues Leu-102–Leu-120 and Leu-157–Leu-172. The span at Asn-173 to Glu-203 shows a compositional bias: polar residues. 2 stretches are compositionally biased toward low complexity: residues Gln-204–Gln-217 and Ser-236–Gln-259. Over residues Lys-268–Arg-278 the composition is skewed to basic residues. Residues Glu-282–Ala-294 show a composition bias toward polar residues. A DNA-binding region (zn(2)-C6 fungal-type) is located at residues Cys-318 to Cys-345. Residues Pro-348–Thr-367 form a disordered region. Basic and acidic residues predominate over residues Gly-351–Thr-367.

It localises to the nucleus. Perhaps a regulatory role. May be involved in transcriptional activation. This is Zinc finger protein 1 (CZF1) from Candida albicans (strain WO-1) (Yeast).